The following is a 455-amino-acid chain: Exodeoxyribonuclease 7 large subunit (455 aa).

This sequence belongs to the XseA family. As to quaternary structure, heterooligomer composed of large and small subunits.

The protein localises to the cytoplasm. It catalyses the reaction Exonucleolytic cleavage in either 5'- to 3'- or 3'- to 5'-direction to yield nucleoside 5'-phosphates.. In terms of biological role, bidirectionally degrades single-stranded DNA into large acid-insoluble oligonucleotides, which are then degraded further into small acid-soluble oligonucleotides. The polypeptide is Exodeoxyribonuclease 7 large subunit (Escherichia fergusonii (strain ATCC 35469 / DSM 13698 / CCUG 18766 / IAM 14443 / JCM 21226 / LMG 7866 / NBRC 102419 / NCTC 12128 / CDC 0568-73)).